The primary structure comprises 444 residues: Glycine receptor subunit alphaZ1 (444 aa).

The N-terminal stretch at 1 to 24 (MFALGIYLWETIVFFSLAASQQAA) is a signal peptide. Residues 25–246 (ARKAASPMPP…RFHLERQMGY (222 aa)) are Extracellular-facing. Residue asparagine 62 is glycosylated (N-linked (GlcNAc...) asparagine). Residues arginine 89 and serine 153 each coordinate glycine. A disulfide bond links cysteine 162 and cysteine 176. Glutamate 216 and aspartate 218 together coordinate Zn(2+). A disulfide bridge links cysteine 222 with cysteine 233. 226 to 231 (YNTGKF) serves as a coordination point for strychnine. Threonine 228 is a binding site for glycine. Histidine 239 serves as a coordination point for Zn(2+). Residues 247-268 (YLIQMYIPSLLIVILSWVSFWI) traverse the membrane as a helical segment. Residues 269–273 (NMDAA) lie on the Cytoplasmic side of the membrane. Residues 274 to 294 (PARVGLGITTVLTMTTQSSGS) traverse the membrane as a helical segment. Residues 295–305 (RASLPKVSYVK) lie on the Extracellular side of the membrane. The chain crosses the membrane as a helical span at residues 306–326 (AIDIWMAVCLLFVFSALLEYA). At 327–412 (AVNFIARQHK…FISRAKRIDT (86 aa)) the chain is on the cytoplasmic side. A helical membrane pass occupies residues 413 to 433 (VSRVAFPLVFLIFNIFYWITY). Over 434-444 (KIIRSEDIHKQ) the chain is Extracellular.

Belongs to the ligand-gated ion channel (TC 1.A.9) family. Glycine receptor (TC 1.A.9.3) subfamily. GLRA1 sub-subfamily. In terms of assembly, homopentamer (in vitro). Heteropentamer composed of glra1 and glrb. Both homopentamers and heteropentamers form functional ion channels. Interacts with glrb. As to expression, expressed in brain.

The protein resides in the postsynaptic cell membrane. Its subcellular location is the synapse. It localises to the perikaryon. It is found in the cell projection. The protein localises to the dendrite. The protein resides in the cell membrane. The catalysed reaction is chloride(in) = chloride(out). Activated by glycine and taurine. Inhibited by strychnine. Allosterically activated by ivermectin. Inhibited by picrotoxinin. Strychnine binding locks the channel in a closed conformation and prevents channel opening in response to extracellular glycine. Can also be activated by GABA and inhibited by bicuculline, but this requires heterologous expression in human cells. Functionally, subunit of heteromeric glycine-gated chloride channels. Plays an important role in the down-regulation of neuronal excitability. Contributes to the generation of inhibitory postsynaptic currents. Channel activity is potentiated by ethanol. The sequence is that of Glycine receptor subunit alphaZ1 (glra1) from Danio rerio (Zebrafish).